A 515-amino-acid polypeptide reads, in one-letter code: Glucose-6-phosphate 1-dehydrogenase (515 aa).

At Ala-2 the chain carries N-acetylalanine. At Ser-8 the chain carries Phosphoserine. Residue Thr-10 is modified to Phosphothreonine. 38–45 (GASGDLAK) is an NADP(+) binding site. Lys-89 carries the N6-acetyllysine modification. 2 residues coordinate NADP(+): Tyr-147 and Lys-171. D-glucose 6-phosphate-binding positions include Lys-171, 201-205 (HYLGK), Glu-239, and Glu-258. N6-(2-hydroxyisobutyryl)lysine; alternate is present on Lys-171. At Lys-171 the chain carries N6-acetyllysine; alternate. Arg-357 is an NADP(+) binding site. D-glucose 6-phosphate contacts are provided by Lys-360 and Arg-365. The NADP(+) site is built by Lys-366, Arg-370, and Arg-393. Gln-395 serves as a coordination point for D-glucose 6-phosphate. NADP(+) contacts are provided by residues 401-403 (YTK) and 421-423 (DLT). The residue at position 403 (Lys-403) is an N6-acetyllysine. The residue at position 432 (Lys-432) is an N6-acetyllysine. Residue Arg-487 coordinates NADP(+). N6-acetyllysine is present on Lys-497. 2 residues coordinate NADP(+): Tyr-503 and Trp-509. Tyr-503 bears the Phosphotyrosine mark.

The protein belongs to the glucose-6-phosphate dehydrogenase family. In terms of assembly, homotetramer; dimer of dimers. Interacts with SIRT2; the interaction is enhanced by H(2)O(2) treatment. Forms a ternary complex with ALDOB and TP53; this interaction is direct. ALDOB stabilizes the complex inhibiting G6PD activity and keeping oxidative pentose phosphate metabolism in check. Acetylated by ELP3 at Lys-403; acetylation inhibits its homodimerization and enzyme activity. Deacetylated by SIRT2 at Lys-403; deacetylation stimulates its enzyme activity.

The protein resides in the cytoplasm. It is found in the cytosol. The protein localises to the membrane. It catalyses the reaction D-glucose 6-phosphate + NADP(+) = 6-phospho-D-glucono-1,5-lactone + NADPH + H(+). Its pathway is carbohydrate degradation; pentose phosphate pathway; D-ribulose 5-phosphate from D-glucose 6-phosphate (oxidative stage): step 1/3. Its function is as follows. Cytosolic glucose-6-phosphate dehydrogenase that catalyzes the first and rate-limiting step of the oxidative branch within the pentose phosphate pathway/shunt, an alternative route to glycolysis for the dissimilation of carbohydrates and a major source of reducing power and metabolic intermediates for fatty acid and nucleic acid biosynthetic processes. The protein is Glucose-6-phosphate 1-dehydrogenase (G6PD) of Bos indicus (Zebu).